A 471-amino-acid chain; its full sequence is Secretogranin-3 (471 aa).

The signal sequence occupies residues 1–22 (MGFLWTGSWILVLVLNSGPIQA). Disordered regions lie at residues 24-73 (PKPE…SNFS), 92-145 (KAKQ…HQLD), 208-231 (ANNY…KIPE), and 345-405 (KLEK…DEAK). Basic and acidic residues predominate over residues 28–45 (GSQDKSLHNRELSAERPL). Phosphoserine is present on Ser-40. An O-linked (Xyl...) (chondroitin sulfate) serine glycan is attached at Ser-40. Low complexity predominate over residues 62–73 (PSESKPSESNFS). 4 stretches are compositionally biased toward basic and acidic residues: residues 106–142 (LNVD…DGLH), 214–231 (APEK…KIPE), 345–355 (KLEKNTTDSKS), and 363–405 (EKSH…DEAK). The residue at position 365 (Ser-365) is a Phosphoserine.

In terms of assembly, interacts with CHGA. Interacts with secretogranin II/SCG2. Interacts (via C-terminus) with CPE. As to expression, expression restricted to the brain and pituitary gland. Not detected in the adrenal gland.

The protein localises to the cytoplasmic vesicle. The protein resides in the secretory vesicle. Its subcellular location is the secretory vesicle membrane. It localises to the secreted. Functionally, member of the granin protein family that regulates the biogenesis of secretory granules. Acts as a sorting receptor for intragranular proteins including chromogranin A/CHGA. May also play a role in angiogenesis. Promotes endothelial proliferation, migration and tube formation through MEK/ERK signaling pathway. The sequence is that of Secretogranin-3 (Scg3) from Rattus norvegicus (Rat).